The chain runs to 118 residues: uncharacterized protein (118 aa).

This is an uncharacterized protein from Clostridium perfringens.